The sequence spans 745 residues: uncharacterized protein (745 aa).

Residues 158–256 (NQVCDYIELH…HQTPKQYRGD (99 aa)) enclose the HTH araC/xylS-type domain. 2 DNA-binding regions (H-T-H motif) span residues 175–196 (SELSEYVGWSESHLSKKFTESL) and 223–246 (ITDIALQNGFSSAASFARTFKHFT).

This is an uncharacterized protein from Staphylococcus aureus (strain MW2).